The sequence spans 119 residues: Protein TusC (119 aa).

It belongs to the DsrF/TusC family. In terms of assembly, heterohexamer, formed by a dimer of trimers. The hexameric TusBCD complex contains 2 copies each of TusB, TusC and TusD. The TusBCD complex interacts with TusE.

The protein resides in the cytoplasm. Its function is as follows. Part of a sulfur-relay system required for 2-thiolation of 5-methylaminomethyl-2-thiouridine (mnm(5)s(2)U) at tRNA wobble positions. This Escherichia coli O157:H7 protein is Protein TusC.